The following is a 316-amino-acid chain: MSTTRHAHLRALAKINLDLRVLGKRPDGFHELRTIFQTISLADTLEISFTPARKTTIELTDVLNIADNLVVRAARMVMDAMRATGRIEMRLTKRIPMGAGLGGGSSDAAAVLLALPVLAGRVLPLPKLSHIGEQLGSDVPFFLLGGAATGIGRGSELFPLPDVPAQSGVVVAPGIHVNTAQAYRDLSRRLSGSLTTELQQNKIFSFQSLTWDTGRLAEARNDFEAVVFEQHPKLAAIKRRLVRAGASAAMMSGSGSALYGLFRDRNAIFRAIELLGEDTTYRISLVSRKRYRALWRRAMSEHTRSNVWPLQSRYNP.

The active site involves Lys14. 96-106 (PMGAGLGGGSS) provides a ligand contact to ATP. Asp138 is a catalytic residue.

The protein belongs to the GHMP kinase family. IspE subfamily.

The enzyme catalyses 4-CDP-2-C-methyl-D-erythritol + ATP = 4-CDP-2-C-methyl-D-erythritol 2-phosphate + ADP + H(+). Its pathway is isoprenoid biosynthesis; isopentenyl diphosphate biosynthesis via DXP pathway; isopentenyl diphosphate from 1-deoxy-D-xylulose 5-phosphate: step 3/6. Catalyzes the phosphorylation of the position 2 hydroxy group of 4-diphosphocytidyl-2C-methyl-D-erythritol. In Solibacter usitatus (strain Ellin6076), this protein is 4-diphosphocytidyl-2-C-methyl-D-erythritol kinase.